Here is a 328-residue protein sequence, read N- to C-terminus: UPF0421 protein SAR1980 (328 aa).

A run of 4 helical transmembrane segments spans residues 19-39, 61-81, 108-128, and 132-152; these read IAIFLTAVFCMALDLTPIYAI, LPATVIGAGFAVLFTYLFGDQ, VAVLTSLAMIPGIHDAYIFNF, and TLTAIIGLVTSGLINFMVFPP.

Belongs to the UPF0421 family.

It localises to the cell membrane. The protein is UPF0421 protein SAR1980 of Staphylococcus aureus (strain MRSA252).